A 344-amino-acid polypeptide reads, in one-letter code: tRNA N6-adenosine threonylcarbamoyltransferase (344 aa).

Fe cation is bound by residues histidine 112 and histidine 116. Residues 135-139 (LVSGG), aspartate 168, glycine 181, and asparagine 271 each bind substrate. Aspartate 299 provides a ligand contact to Fe cation.

Belongs to the KAE1 / TsaD family. It depends on Fe(2+) as a cofactor.

The protein resides in the cytoplasm. The enzyme catalyses L-threonylcarbamoyladenylate + adenosine(37) in tRNA = N(6)-L-threonylcarbamoyladenosine(37) in tRNA + AMP + H(+). Required for the formation of a threonylcarbamoyl group on adenosine at position 37 (t(6)A37) in tRNAs that read codons beginning with adenine. Is involved in the transfer of the threonylcarbamoyl moiety of threonylcarbamoyl-AMP (TC-AMP) to the N6 group of A37, together with TsaE and TsaB. TsaD likely plays a direct catalytic role in this reaction. This Sphingopyxis alaskensis (strain DSM 13593 / LMG 18877 / RB2256) (Sphingomonas alaskensis) protein is tRNA N6-adenosine threonylcarbamoyltransferase.